Here is a 186-residue protein sequence, read N- to C-terminus: METFSSKDMALKAQKKILSKMATKSMVQMIIDDTSSEILDELYRVSKEYTGNRSEAQKVVKDLIKVVVKIGVLFRHNRFNEEELKLAQNFQKKLRQGAMTAISFHEVDFTFDKTVMSDILTESRDMLLKLVNTHLTTKSHGRINHVFNHYADPELLTQLYNSSGPLKPHLNKICNGLNKLLENGTL.

It belongs to the TNFAIP8 family. TNFAIP8L2 subfamily.

Functionally, acts as a negative regulator of innate and adaptive immunity by maintaining immune homeostasis. Negative regulator of Toll-like receptor and T-cell receptor function. Prevents hyperresponsiveness of the immune system and maintains immune homeostasis. Inhibits jun/ap1 and NF-kappa-B activation. Promotes Fas-induced apoptosis. The polypeptide is Tumor necrosis factor, alpha-induced protein 8-like protein 2 B (tnfaip8l2b) (Danio rerio (Zebrafish)).